The chain runs to 308 residues: Ribosomal RNA small subunit methyltransferase H (308 aa).

Residues 33–35, Asp51, Phe82, Asp96, and Gln103 each bind S-adenosyl-L-methionine; that span reads GGY.

It belongs to the methyltransferase superfamily. RsmH family.

The protein resides in the cytoplasm. It carries out the reaction cytidine(1402) in 16S rRNA + S-adenosyl-L-methionine = N(4)-methylcytidine(1402) in 16S rRNA + S-adenosyl-L-homocysteine + H(+). Its function is as follows. Specifically methylates the N4 position of cytidine in position 1402 (C1402) of 16S rRNA. In Rickettsia canadensis (strain McKiel), this protein is Ribosomal RNA small subunit methyltransferase H.